Here is a 285-residue protein sequence, read N- to C-terminus: Glycine--tRNA ligase alpha subunit (285 aa).

The protein belongs to the class-II aminoacyl-tRNA synthetase family. Tetramer of two alpha and two beta subunits.

It is found in the cytoplasm. It carries out the reaction tRNA(Gly) + glycine + ATP = glycyl-tRNA(Gly) + AMP + diphosphate. The chain is Glycine--tRNA ligase alpha subunit from Thermodesulfovibrio yellowstonii (strain ATCC 51303 / DSM 11347 / YP87).